Consider the following 131-residue polypeptide: Small ribosomal subunit protein uS8 (131 aa).

It belongs to the universal ribosomal protein uS8 family. As to quaternary structure, part of the 30S ribosomal subunit. Contacts proteins S5 and S12.

In terms of biological role, one of the primary rRNA binding proteins, it binds directly to 16S rRNA central domain where it helps coordinate assembly of the platform of the 30S subunit. This is Small ribosomal subunit protein uS8 from Campylobacter lari (strain RM2100 / D67 / ATCC BAA-1060).